The following is a 72-amino-acid chain: Protein Kish (72 aa).

A signal peptide spans 1–26 (MSALFNFRSLLQVILLLICSCSYVHG). The Lumenal portion of the chain corresponds to 27-53 (QWPSLLDRYKNHEVLGAFWKMARVGER). Residues 54–72 (ASPYVSLACILMAISQFNS) traverse the membrane as a helical segment.

Belongs to the KISH family.

The protein localises to the endoplasmic reticulum membrane. It is found in the golgi apparatus membrane. Its function is as follows. Involved in the early part of the secretory pathway. This is Protein Kish from Saccharomyces cerevisiae (strain ATCC 204508 / S288c) (Baker's yeast).